We begin with the raw amino-acid sequence, 315 residues long: Serine/threonine-protein phosphatase PP2A catalytic subunit 3 (315 aa).

Residues aspartate 62, histidine 64, aspartate 90, and asparagine 122 each coordinate Mn(2+). Histidine 123 functions as the Proton donor in the catalytic mechanism. Positions 172 and 247 each coordinate Mn(2+). The disordered stretch occupies residues 294 to 315 (QFEPAPRENEPHTTRRVPDYFL). The span at 298–315 (APRENEPHTTRRVPDYFL) shows a compositional bias: basic and acidic residues. Leucine 315 is subject to Leucine methyl ester.

It belongs to the PPP phosphatase family. PP-2A subfamily. It depends on Mn(2+) as a cofactor. In terms of processing, reversibly methyl esterified on Leu-315 by leucine carboxyl methyltransferase 1 (PPM1) and protein phosphatase methylesterase 1 (PPE1). Carboxyl methylation influences the affinity of the catalytic subunit for the different regulatory subunits, thereby modulating the PP2A holoenzyme's substrate specificity, enzyme activity and cellular localization.

It carries out the reaction O-phospho-L-seryl-[protein] + H2O = L-seryl-[protein] + phosphate. The enzyme catalyses O-phospho-L-threonyl-[protein] + H2O = L-threonyl-[protein] + phosphate. The polypeptide is Serine/threonine-protein phosphatase PP2A catalytic subunit 3 (Ppn3) (Paramecium tetraurelia).